The sequence spans 322 residues: uncharacterized protein (322 aa).

This sequence to M.jannaschii MJ0640 and MJ0799.

This is an uncharacterized protein from Synechocystis sp. (strain ATCC 27184 / PCC 6803 / Kazusa).